A 454-amino-acid polypeptide reads, in one-letter code: ABSCISIC ACID-INSENSITIVE 5-like protein 6 (454 aa).

Residues S32, S55, and S126 each carry the phosphoserine modification. Position 169 is a phosphothreonine (T169). The bZIP domain maps to 372-435; sequence IERRQKRMIK…KNQLLEPLRQ (64 aa). Positions 374–393 are basic motif; the sequence is RRQKRMIKNRESAARSRARK. Residues 400–414 form a leucine-zipper region; it reads LEAEIAQLKELNEEL.

It belongs to the bZIP family. ABI5 subfamily. In terms of assembly, DNA-binding heterodimer. Interacts with ABI3 and the AFP proteins AFP1, AFP2, AFP3 and AFP4. As to expression, expressed in roots and flowers.

It localises to the nucleus. Functionally, binds to the ABA-responsive element (ABRE). Mediates stress-responsive ABA signaling. The chain is ABSCISIC ACID-INSENSITIVE 5-like protein 6 (ABF3) from Arabidopsis thaliana (Mouse-ear cress).